We begin with the raw amino-acid sequence, 121 residues long: Large ribosomal subunit protein bL17 (121 aa).

This sequence belongs to the bacterial ribosomal protein bL17 family. Part of the 50S ribosomal subunit. Contacts protein L32.

The protein is Large ribosomal subunit protein bL17 of Rubrobacter xylanophilus (strain DSM 9941 / JCM 11954 / NBRC 16129 / PRD-1).